The chain runs to 466 residues: ATFFLLSWTHCWSLPLPYGDDDDDDLSEEDLEFAEHYLKSYYHPVTLAGILKKSTVTSTVDRLREMQSFFGLDVTGKLDDPTLDIMRKPRCGVPDVGVYNVFPRTLKWSQTNLTYRIVNYTPDISHSEVEKAFRKAFKVWSDVTPLNFTRIHDGTADIMISFGTKEHGDFYPFDGPSGLLAHAFPPGPNLGGDAHFDDDETWTSSSKGYNLFIVAAHELGHSLGLDHSKDPGALMFPIYTYTGKSHFMLPDDDVQGIQSLYGPGDEDPNPKHPKTPEKCDPALSLDAITSLRGETMIFKDRFFWRLHPQQVEPELFLTKSFWPELPNHVDAAYEHPSRDLMFIFRGRKFWALNGYDIMEGYPRKISDLGFPKEVKRLSAAVHFEDTGKTLFFSGNHVWSYDDANQTMDKDYPRLIEEEFPGIGDKVDAVYEKNGYIYFFNGPIQFEYSIWSNRIVRVMPTNSLLWC.

The signal sequence occupies residues 1-13 (ATFFLLSWTHCWS). A propeptide spans 14–98 (LPLPYGDDDD…PRCGVPDVGV (85 aa)) (activation peptide). The Cysteine switch motif lies at 89 to 96 (PRCGVPDV). Residue cysteine 91 coordinates Zn(2+). N-linked (GlcNAc...) asparagine glycosylation occurs at asparagine 112. Aspartate 123 contributes to the Ca(2+) binding site. Residue asparagine 147 is glycosylated (N-linked (GlcNAc...) asparagine). Aspartate 157 contributes to the Ca(2+) binding site. Positions 167 and 169 each coordinate Zn(2+). The interval 171–241 (YPFDGPSGLL…GALMFPIYTY (71 aa)) is interaction with TIMP2. Ca(2+) contacts are provided by aspartate 174, glycine 175, serine 177, and leucine 179. Position 182 (histidine 182) interacts with Zn(2+). Positions 189, 191, and 193 each coordinate Ca(2+). Zn(2+) is bound at residue histidine 195. Ca(2+)-binding residues include aspartate 197, aspartate 198, and glutamate 200. Residue histidine 217 participates in Zn(2+) binding. Glutamate 218 is a catalytic residue. Residues histidine 221, histidine 227, and methionine 235 each coordinate Zn(2+). Residues 258–279 (QSLYGPGDEDPNPKHPKTPEKC) are disordered. Positions 263-466 (PGDEDPNPKH…VMPTNSLLWC (204 aa)) are interaction with collagen. A compositionally biased stretch (basic and acidic residues) spans 268-279 (PNPKHPKTPEKC). Hemopexin repeat units lie at residues 276 to 325 (PEKC…WPEL), 326 to 372 (PNHV…GFPK), 374 to 422 (VKRL…FPGI), and 423 to 466 (GDKV…LLWC). An intrachain disulfide couples cysteine 279 to cysteine 466. 4 residues coordinate Ca(2+): aspartate 286, isoleucine 288, aspartate 330, and alanine 332. Residue tyrosine 361 is modified to Phosphotyrosine; by PKDCC. Serine 378 and alanine 380 together coordinate Ca(2+). Asparagine 404 carries N-linked (GlcNAc...) asparagine glycosylation. Residues aspartate 427 and valine 429 each coordinate Ca(2+).

Belongs to the peptidase M10A family. It depends on Ca(2+) as a cofactor. Zn(2+) serves as cofactor. In terms of processing, the proenzyme is activated by removal of the propeptide; this cleavage can be effected by other matrix metalloproteinases, such as MMP2, MMP3 and MMP14 and may involve several cleavage steps. Cleavage can also be autocatalytic, after partial maturation by another protease or after treatment with 4-aminophenylmercuric acetate (APMA) (in vitro). Post-translationally, N-glycosylated. Tyrosine phosphorylated by PKDCC/VLK.

It is found in the secreted. The protein resides in the extracellular space. Its subcellular location is the extracellular matrix. Its function is as follows. Plays a role in the degradation of extracellular matrix proteins including fibrillar collagen, fibronectin, TNC and ACAN. Cleaves triple helical collagens, including type I, type II and type III collagen, but has the highest activity with soluble type II collagen. Can also degrade collagen type IV, type XIV and type X. May also function by activating or degrading key regulatory proteins, such as TGFB1 and CCN2. Plays a role in wound healing, tissue remodeling, cartilage degradation, bone development, bone mineralization and ossification. Required for normal embryonic bone development and ossification. Plays a role in the healing of bone fractures via endochondral ossification. Plays a role in wound healing, probably by a mechanism that involves proteolytic activation of TGFB1 and degradation of CCN2. Plays a role in keratinocyte migration during wound healing. May play a role in cell migration and in tumor cell invasion. The protein is Collagenase 3 (Mmp13) of Rattus norvegicus (Rat).